The sequence spans 926 residues: Glycogenin (926 aa).

Residues Leu-10, Thr-12, Tyr-16, and Arg-85 each coordinate UDP. Positions 10, 12, 16, 85, 94, 111, 112, 113, 145, 146, 184, 187, and 188 each coordinate UDP-alpha-D-glucose. UDP contacts are provided by Asp-111, Ala-112, and Asp-113. Asp-111 is a Mn(2+) binding site. Residue Asp-113 coordinates Mn(2+). Tyr-219 carries O-linked (Glc...) tyrosine glycosylation. UDP is bound by residues His-236, Gly-239, and Lys-242. His-236 contributes to the Mn(2+) binding site. UDP-alpha-D-glucose-binding residues include Gly-239 and Lys-242. 5 disordered regions span residues 379–432 (PSVS…PEMS), 452–476 (YYAH…LPKE), 547–584 (SIQN…PPRH), 611–749 (MSGK…ETVQ), and 768–903 (LPHA…PNTD). Residues 386–402 (LTPPPADAAPAPAPAPV) are compositionally biased toward pro residues. A compositionally biased stretch (polar residues) spans 404–413 (TQTEQKTAQP). A compositionally biased stretch (basic and acidic residues) spans 456 to 469 (PESHRPATEHKEPE). Positions 557–566 (AHSQHQSHAT) are enriched in low complexity. Residues 655–683 (SLHSLQSVPGTPRTQYSTFGKSPRLTNAR) show a composition bias toward polar residues. Residues 692–704 (EQPEDSADGDDEN) show a composition bias toward acidic residues. The span at 733–745 (DRWAQTDRVKTVD) shows a compositional bias: basic and acidic residues. Residues 788-798 (SGNGRAGGGGQ) are compositionally biased toward gly residues. Positions 800-812 (EAQTQHQSTYYEY) are enriched in polar residues. 2 stretches are compositionally biased toward low complexity: residues 813–824 (QQQHPHSQQSRQ) and 851–875 (HAQG…NPNL).

Belongs to the glycosyltransferase 8 family. Glycogenin subfamily. Requires Mn(2+) as cofactor.

Its subcellular location is the cytoplasm. The protein resides in the vacuole. It carries out the reaction L-tyrosyl-[glycogenin] + UDP-alpha-D-glucose = alpha-D-glucosyl-L-tyrosyl-[glycogenin] + UDP + H(+). It catalyses the reaction [1,4-alpha-D-glucosyl](n)-L-tyrosyl-[glycogenin] + UDP-alpha-D-glucose = [1,4-alpha-D-glucosyl](n+1)-L-tyrosyl-[glycogenin] + UDP + H(+). Its function is as follows. Self-glucosylating initiator of glycogen synthesis. It catalyzes the formation of a short alpha (1,4)-glucosyl chain covalently attached via a glucose 1-O-tyrosyl linkage to internal tyrosine residues and these chains act as primers for the elongation reaction catalyzed by glycogen synthase. The protein is Glycogenin of Cryptococcus neoformans var. grubii serotype A (strain H99 / ATCC 208821 / CBS 10515 / FGSC 9487) (Filobasidiella neoformans var. grubii).